The chain runs to 29 residues: Cyclotide mden-F (29 aa).

The cyclopeptide (Gly-Asn) cross-link spans 1–29; the sequence is GLPICGETCFFGKCNTPKCTCINPICYKN. 3 disulfide bridges follow: cysteine 5–cysteine 19, cysteine 9–cysteine 21, and cysteine 14–cysteine 26.

It belongs to the cyclotide family. Post-translationally, this is a cyclic peptide.

Probably participates in a plant defense mechanism. This is Cyclotide mden-F from Melicytus dentatus (Tree violet).